Reading from the N-terminus, the 546-residue chain is Chaperonin GroEL (546 aa).

ATP is bound by residues 30–33 (TLGP), lysine 51, 87–91 (DGTTT), glycine 415, 479–481 (NAA), and aspartate 495.

This sequence belongs to the chaperonin (HSP60) family. Forms a cylinder of 14 subunits composed of two heptameric rings stacked back-to-back. Interacts with the co-chaperonin GroES.

It is found in the cytoplasm. It catalyses the reaction ATP + H2O + a folded polypeptide = ADP + phosphate + an unfolded polypeptide.. Its function is as follows. Together with its co-chaperonin GroES, plays an essential role in assisting protein folding. The GroEL-GroES system forms a nano-cage that allows encapsulation of the non-native substrate proteins and provides a physical environment optimized to promote and accelerate protein folding. The sequence is that of Chaperonin GroEL from Allochromatium vinosum (Chromatium vinosum).